The following is a 140-amino-acid chain: MSMKYLMLLFAAMIIRSFANSGNAIETTLSEITNTTTDIPAIRLCGPEGDRYCFHGICIHARDIDGMYCRCSHGYTGIRCQHVVLVDYQRSEKPNTTTSYIPSPGIVLVLLVSIIVCCLLFVYRFTRRTNKLPLQDMVVP.

Residues 1 to 18 form the signal peptide; that stretch reads MSMKYLMLLFAAMIIRSF. At 19–100 the chain is on the extracellular side; the sequence is ANSGNAIETT…SEKPNTTTSY (82 aa). Asparagine 34 is a glycosylation site (N-linked (GlcNAc...) asparagine; by host). The EGF-like domain maps to 41 to 81; sequence AIRLCGPEGDRYCFHGICIHARDIDGMYCRCSHGYTGIRCQ. 3 disulfide bridges follow: cysteine 45/cysteine 58, cysteine 53/cysteine 69, and cysteine 71/cysteine 80. Asparagine 95 carries N-linked (GlcNAc...) asparagine; by host glycosylation. Residues 101–121 traverse the membrane as a helical segment; that stretch reads IPSPGIVLVLLVSIIVCCLLF. The Cytoplasmic segment spans residues 122-140; it reads VYRFTRRTNKLPLQDMVVP.

It belongs to the orthopoxvirus OPG019 family. As to quaternary structure, variola growth factor interacts with host EGFR and promotes EGFR dimerization.

Its subcellular location is the host membrane. The protein resides in the secreted. Stimulates cellular proliferation (hyperplasia)and mobility around infected cells to promote rapid and efficient spread of infection. This effect is beneficial for virus replication in vivo, because poxviruses replicate possibly better in proliferating cells than in quiescent cells. Acts by binding host EGFR, inducing its dimerization, autophosphorylation and leading to activation of several cellular pathways regulating cell proliferation or cell survival. The activation by host EGFR of mitogen activated protein kinases (MAPK) and extracellular-signal regulated kinases (ERK) are essential for the positive effect of vaccinia growth factor on poxvirus virulence in vivo. This is Pro-variola growth factor (OPG019) from Variola virus (isolate Human/India/Ind3/1967) (VARV).